The chain runs to 430 residues: MWRLVPPKLGRLSRSLKLAALGSLLVLMVLHSPSLLASWQRNELTDRRFLQLNKCPACFGTSWCRRFLNGQVVFEAWGRLRLLDFLNVKNVYFAQYGEPREGGRRRVVLKRLGSQRELAQLDQSICKRATGRPRCDLLQAMPRTEFARLNGDVRLLTPEAVEGWSDLVHCPSQRLLDRLVRRYAETKDSGSFLLRNLKDSERMQLLLTLAFNPEPLVLQSFPSDEGWPFAKYLGACGRMVAVNYVGEELWSYFNAPWEKRVDLAWQLMEIAEQLTNNDFEFALYLLDVSFDNFAVGPRDGKVIIVDAENVLVADKRLIRQNKPENWDVWYESKFDDCDKEACLSFSKEILCARATVDHNYYAVCQNLLSRHATWRGTSGGLLHDPPSEIAKDGRLEALLDECANPKKRYGRFQAAKELREYLAQLSNNVR.

The N-terminal stretch at 1 to 35 (MWRLVPPKLGRLSRSLKLAALGSLLVLMVLHSPSL) is a signal peptide.

It belongs to the DIPK family.

The protein localises to the cytoplasmic vesicle. The protein resides in the COPI-coated vesicle. It localises to the golgi apparatus. Its subcellular location is the secreted. In terms of biological role, may play a role in cardiomyocyte proliferation through paracrine signaling and activation of the PPI3K-AKT-CDK7 signaling cascade. The chain is Divergent protein kinase domain 2A from Homo sapiens (Human).